Consider the following 64-residue polypeptide: Arasin 1 (64 aa).

Positions 1-25 (MERRTLLVVLLVCSCVVAAAAEASP) are cleaved as a signal peptide. A disordered region spans residues 22–43 (EASPSRWPSPGRPRPFPGRPKP). The pro/Arg-rich region responsible for antibacterial and antifungal activity stretch occupies residues 26-48 (SRWPSPGRPRPFPGRPKPIFRPR). Residues 31–43 (PGRPRPFPGRPKP) are compositionally biased toward pro residues. Positions 49–62 (PCNCYAPPCPCDRW) are cystein-containing C-terminal region important for stability but not essential for antimicrobial activity. Disulfide bonds link cysteine 50–cysteine 59 and cysteine 52–cysteine 57. A propeptide spanning residues 63 to 64 (RH) is cleaved from the precursor.

As to quaternary structure, interacts with chitin through the N-terminal region (26-48). This interaction may be important, since chitin is a component of the fungal cell wall, as well as of the crab exoskeleton (permitting a possible action of arasin in wound healing in case of lesions). In terms of processing, disulfide bonds are important for activity especially against Gram-negative bacteria, since the linearization of the peptide causes a strong decrease of activity on these bacteria. In terms of tissue distribution, mainly expressed in hemocytes. No or very low expression in heart, gills, inestines, and epidermis.

Functionally, antimicrobial peptide that has a large activity spectrum with activity against Gram-positive, Gram-negative bacteria, as well as against fungi. Shows activity at micromolar concentrations. Displays minimal inhibitory concentration (MIC) values lower than minimal bactericidal concentrations (MBC). Synthetic peptides with similar activities than the full length peptide (composed of the first 23 or 25 amino acids (Arasin 1(26-48) or Arasin 1(26-50))) may have a dual mode of action depending on the peptide concentrations. At MIC concentrations, the peptide penetrates into the cytoplasm of target cells (tested on the Gram-negative E.coli). The two inner membrane proteins YgdD and SbmA may be required for this uptake. At concentrations higher than MIC, arasin may act by disrupting membranes. Full-length and N-terminal peptides do not show hemolytic activity. This Hyas araneus (Atlantic lyre crab) protein is Arasin 1.